The following is a 435-amino-acid chain: DMATS-type prenyltransferase fscG (435 aa).

Arg-111, Lys-193, Tyr-195, Arg-259, Lys-261, Tyr-263, Tyr-352, and Tyr-423 together coordinate dimethylallyl diphosphate.

The protein belongs to the tryptophan dimethylallyltransferase family.

It functions in the pathway secondary metabolite biosynthesis. Its function is as follows. DMATS-type prenyltransferase; part of the fragmented gene cluster that mediates the biosynthesis of fusarochromene, a tryptophan-derived metabolite closely related to a group of mycotoxins including fusarochromanone. Within the pathway, fscG catalyzes the prenylation of the primary alcohol produced by fscA which is necessary for the formation of the chromene ring by the oxidoreductase fscI. The first step of the pathway is the epimerization of L-tryptophan to D-tryptophan in the presence of the NRPS-like tryptophan epimerase fscC. D-tryptophan is subsequently hydroxylated by the tryptophan 6-hydroxylase fscE to yield 6-hydroxytryptophan. The pyrrole ring undergoes cleavaged by the tryptophan 2,3-dioxygenase fscD and is finally converted to 4-hydroxykyrunenine by the hydrolase fscH. The NRPS-like oxidoreductase fscA reduces the carboxyl group to primary alcohol and the DMATS-type prenyltransferase fscG performs prenylation, followed by the formation of a chromene ring catalyzed by the oxidoreductase fscI, which leads to desacetylfusarochromene. Epoxidation by fscF and rearrangement reactions of chromene double bonds convert compound desacetylfusarochromene to fusarochromanones. Although specific acetyltransferases were not found near the fsc gene cluster, several predicted enzymes containing the N-acetyltransferase superfamily domain are present in the genome of F.equiseti. These predicted enzymes may have the potential to convert desacetylfusarochromene to fusarochromene. This is DMATS-type prenyltransferase fscG from Fusarium equiseti (Fusarium scirpi).